We begin with the raw amino-acid sequence, 116 residues long: POU domain, class 4, transcription factor 1 (116 aa).

The POU-specific domain maps to 1–54; sequence VTQADVGSALANLKIPGVGSLSQSTICRFESLTLSHNNMIALKPILQAWLEEAE. Residues 56-79 are disordered; that stretch reads AQREKMNKPELFNGGEKKRKRTSI. The segment at residues 72–116 is a DNA-binding region (homeobox); it reads KKRKRTSIAAPEKRSLEAYFAVQPRPSSEKIAAIAEKLDLKKNVV.

Belongs to the POU transcription factor family. Class-4 subfamily.

The protein resides in the nucleus. It is found in the cytoplasm. Multifunctional transcription factor with different regions mediating its different effects. Acts by binding (via its C-terminal domain) to sequences related to the consensus octamer motif 5'-ATGCAAAT-3' in the regulatory regions of its target genes. Regulates the expression of specific genes involved in differentiation and survival within a subset of neuronal lineages. It has been shown that activation of some of these genes requires its N-terminal domain, maybe through a neuronal-specific cofactor. In Gallus gallus (Chicken), this protein is POU domain, class 4, transcription factor 1 (POU4F1).